A 1784-amino-acid chain; its full sequence is Protein mel-28 (1784 aa).

The interval 1-956 is required for nuclear envelope and kinetochore localization; it reads MDNENSSIFK…QNDDEDMPEV (956 aa). The segment at 566 to 778 is required for association with mitotic chromosomes; the sequence is GKIEEFCQLA…TSPEDSEHSE (213 aa). Positions 846 to 1071 are important for nuclear localization; the sequence is APMTVTIGKH…HNSILKTAKG (226 aa). Disordered regions lie at residues 945–994 and 1115–1784; these read KVQN…AKRI and ETMT…RAKQ. The segment covering 1126 to 1149 has biased composition (basic and acidic residues); it reads GKHDEEKDSEKNVVDEMEEVKDQE. 2 stretches are compositionally biased toward acidic residues: residues 1222–1232 and 1266–1278; these read LEEEGEDEDIW and VNEE…EEVQ. The interval 1239 to 1601 is chromatin binding; it reads FEVQMDEDCE…TTVDPSSSAL (363 aa). The span at 1279 to 1293 shows a compositional bias: basic and acidic residues; it reads QDAKEPEKTEKRQEE. Over residues 1297 to 1306 the composition is skewed to low complexity; it reads EVMQPVIPEE. The span at 1321 to 1336 shows a compositional bias: acidic residues; sequence ELQEEPDIVPTGDEDT. Over residues 1337–1351 the composition is skewed to basic and acidic residues; that stretch reads ADKVQEQAVEEDRPP. The segment covering 1352–1366 has biased composition (polar residues); it reads SRNTRSSSVQKSTSQ. Positions 1367–1382 are enriched in basic and acidic residues; sequence VEDRDPKELVEEERPP. Over residues 1383-1398 the composition is skewed to polar residues; sequence SRNTRSASVQKSSNQE. Over residues 1428 to 1444 the composition is skewed to basic and acidic residues; the sequence is KVKDQKPEELIEEDRPP. A compositionally biased stretch (polar residues) spans 1445–1459; sequence SRNTRSASAQKTVAA. Residues 1533–1546 show a composition bias toward low complexity; the sequence is AAASTSSSRAGSVT. The span at 1566–1576 shows a compositional bias: acidic residues; that stretch reads VQEEEEEEAEE. Residues 1581–1606 are compositionally biased toward polar residues; that stretch reads SRSTRSASVKNTTVDPSSSALASTKR. The interval 1601–1784 is important for nuclear localization; sequence LASTKRTTSR…LLRSARRAKQ (184 aa). The a.T hook 1 DNA-binding region spans 1630–1642; sequence TPKRGRPAKKDAG. Residues 1630–1784 are required for chromosome segregation, nuclear growth, nucleoplasmic accumulation and cell cycle timing, but not required for nuclear envelope and kinetochore localization; that stretch reads TPKRGRPAKK…LLRSARRAKQ (155 aa). Over residues 1716 to 1735 the composition is skewed to polar residues; it reads AGTSKQSRSVTRSRASSIDV. A DNA-binding region (a.T hook 2) is located at residues 1746-1758; it reads KRGRGRPPKTVLE.

As to expression, ubiquitously expressed (at protein level).

It is found in the nucleus. The protein resides in the nucleoplasm. Its subcellular location is the nucleus envelope. It localises to the nucleus inner membrane. The protein localises to the nuclear pore complex. It is found in the chromosome. The protein resides in the centromere. Its subcellular location is the kinetochore. Its function is as follows. Nuclear envelope protein which has essential roles in assembly of nuclear pore complexes and in chromatin maintenance during the cell cycle. Appears to be a stable structural component of the nuclear envelope during interphase. In dividing cells, localizes to kinetochores during early stages of mitosis and then to chromatin during late mitosis. Important for several mitotic processes including chromosome condensation, kinetochore assembly, chromosome segregation and cell-cycle timing. In postmitotic cells, plays a role in the early steps of nuclear pore complex assembly by recruiting the nucleoporins npp-10 and npp-5 to chromatin. Also involved in meiotic chromosome segregation. May function downstream of the Ran GTPase signaling pathway. The protein is Protein mel-28 of Caenorhabditis elegans.